A 163-amino-acid chain; its full sequence is Nucleotide-binding protein GK0742 (163 aa).

This sequence belongs to the YajQ family.

In terms of biological role, nucleotide-binding protein. The polypeptide is Nucleotide-binding protein GK0742 (Geobacillus kaustophilus (strain HTA426)).